Reading from the N-terminus, the 311-residue chain is Bifunctional pinoresinol-lariciresinol reductase (311 aa).

Residues 10–16 (GGTGYLG), Arg35, and Lys44 each bind NADP(+). Catalysis depends on Lys138, which acts as the Proton acceptor. Arg142 is an NADP(+) binding site. His270 contacts substrate.

It belongs to the NmrA-type oxidoreductase family. Isoflavone reductase subfamily. As to quaternary structure, dimer. Expressed in rhizomes, stems, and leaves.

It catalyses the reaction (-)-secoisolariciresinol + NADP(+) = (+)-lariciresinol + NADPH + H(+). It carries out the reaction (+)-lariciresinol + NADP(+) = (+)-pinoresinol + NADPH + H(+). The protein operates within aromatic compound metabolism; phenylpropanoid biosynthesis. Functionally, reductase involved in lignan biosynthesis. Also involved in the biosynthesis of etoposide, a chemotherapeutic compound of the topoisomerase inhibitor family. Catalyzes the enantioselective sequential conversion of (+)-pinoresinol into (+)-lariciresinol and of (+)-lariciresinol into (-)-secoisolariciresinol. Abstracts the 4R-hydride from the NADPH cofactor during catalysis. The chain is Bifunctional pinoresinol-lariciresinol reductase from Sinopodophyllum hexandrum (Himalayan may apple).